A 156-amino-acid chain; its full sequence is Small ribosomal subunit protein uS7c (156 aa).

It belongs to the universal ribosomal protein uS7 family. In terms of assembly, part of the 30S ribosomal subunit.

It is found in the plastid. The protein localises to the chloroplast. One of the primary rRNA binding proteins, it binds directly to 16S rRNA where it nucleates assembly of the head domain of the 30S subunit. The polypeptide is Small ribosomal subunit protein uS7c (rps7) (Cyanidium caldarium (Red alga)).